A 513-amino-acid chain; its full sequence is V-type proton ATPase subunit B, kidney isoform (513 aa).

Arg394 is an ATP binding site. The PDZ-binding motif lies at 510–513 (DTAL).

It belongs to the ATPase alpha/beta chains family. V-ATPase is a heteromultimeric enzyme made up of two complexes: the ATP-hydrolytic V1 complex and the proton translocation V0 complex. The V1 complex consists of three catalytic AB heterodimers that form a heterohexamer, three peripheral stalks each consisting of EG heterodimers, one central rotor including subunits D and F, and the regulatory subunits C and H. The proton translocation complex V0 consists of the proton transport subunit a, a ring of proteolipid subunits c9c'', rotary subunit d, subunits e and f, and the accessory subunits ATP6AP1/Ac45 and ATP6AP2/PRR. Forms a complex with NHERF1 and SCL4A7. As to expression, kidney cortex and medulla.

Its subcellular location is the apical cell membrane. It is found in the basolateral cell membrane. Its function is as follows. Non-catalytic subunit of the V1 complex of vacuolar(H+)-ATPase (V-ATPase), a multisubunit enzyme composed of a peripheral complex (V1) that hydrolyzes ATP and a membrane integral complex (V0) that translocates protons. V-ATPase is responsible for acidifying and maintaining the pH of intracellular compartments and in some cell types, is targeted to the plasma membrane, where it is responsible for acidifying the extracellular environment. Essential for the proper assembly and activity of V-ATPase. In renal intercalated cells, mediates secretion of protons (H+) into the urine thereby ensuring correct urinary acidification. Required for optimal olfactory function by mediating the acidification of the nasal olfactory epithelium. This chain is V-type proton ATPase subunit B, kidney isoform (ATP6V1B1), found in Bos taurus (Bovine).